The primary structure comprises 357 residues: tRNA-specific 2-thiouridylase MnmA (357 aa).

ATP is bound by residues 11 to 18 (AMSGGVDS) and Leu-37. Catalysis depends on Cys-102, which acts as the Nucleophile. A disulfide bridge connects residues Cys-102 and Cys-197. Gly-126 is a binding site for ATP. An interaction with tRNA region spans residues 148 to 150 (KDQ). Cys-197 functions as the Cysteine persulfide intermediate in the catalytic mechanism. The tract at residues 301-302 (RY) is interaction with tRNA.

It belongs to the MnmA/TRMU family.

The protein localises to the cytoplasm. The enzyme catalyses S-sulfanyl-L-cysteinyl-[protein] + uridine(34) in tRNA + AH2 + ATP = 2-thiouridine(34) in tRNA + L-cysteinyl-[protein] + A + AMP + diphosphate + H(+). Catalyzes the 2-thiolation of uridine at the wobble position (U34) of tRNA, leading to the formation of s(2)U34. The chain is tRNA-specific 2-thiouridylase MnmA from Dehalococcoides mccartyi (strain ATCC BAA-2266 / KCTC 15142 / 195) (Dehalococcoides ethenogenes (strain 195)).